We begin with the raw amino-acid sequence, 320 residues long: Cytochrome f (320 aa).

Residues 1–35 form the signal peptide; sequence MQTRKTLSWIKEEITRSISLSLMLSIITHASLSNA. Residues Y36, C56, C59, and H60 each contribute to the heme site. A helical transmembrane segment spans residues 286–306; that stretch reads VQGLLFFLTSVLLAQIFLVLK.

The protein belongs to the cytochrome f family. The 4 large subunits of the cytochrome b6-f complex are cytochrome b6, subunit IV (17 kDa polypeptide, petD), cytochrome f and the Rieske protein, while the 4 small subunits are PetG, PetL, PetM and PetN. The complex functions as a dimer. It depends on heme as a cofactor.

The protein localises to the plastid. Its subcellular location is the chloroplast thylakoid membrane. Component of the cytochrome b6-f complex, which mediates electron transfer between photosystem II (PSII) and photosystem I (PSI), cyclic electron flow around PSI, and state transitions. This is Cytochrome f from Pelargonium hortorum (Common geranium).